Here is a 176-residue protein sequence, read N- to C-terminus: NAD(P)H-quinone oxidoreductase subunit 6, chloroplastic (176 aa).

Helical transmembrane passes span 10–30 (FLLV…VLLP), 32–52 (PIFS…LYIL), 61–81 (AQLL…VMFM), 92–112 (LWTV…FLLM), and 152–172 (FFLP…GAIS).

It belongs to the complex I subunit 6 family. As to quaternary structure, NDH is composed of at least 16 different subunits, 5 of which are encoded in the nucleus.

It is found in the plastid. The protein localises to the chloroplast thylakoid membrane. The enzyme catalyses a plastoquinone + NADH + (n+1) H(+)(in) = a plastoquinol + NAD(+) + n H(+)(out). It carries out the reaction a plastoquinone + NADPH + (n+1) H(+)(in) = a plastoquinol + NADP(+) + n H(+)(out). Functionally, NDH shuttles electrons from NAD(P)H:plastoquinone, via FMN and iron-sulfur (Fe-S) centers, to quinones in the photosynthetic chain and possibly in a chloroplast respiratory chain. The immediate electron acceptor for the enzyme in this species is believed to be plastoquinone. Couples the redox reaction to proton translocation, and thus conserves the redox energy in a proton gradient. In Olimarabidopsis pumila (Dwarf rocket), this protein is NAD(P)H-quinone oxidoreductase subunit 6, chloroplastic (ndhG).